A 443-amino-acid chain; its full sequence is MPASARWQALQEVSILNTGAELPWGGKFSGVAKLIDDAFDAIEKDNEKLKGVLQRISGYAVNEDTLRGLIILFSDTHFTRPTYNGEPVHLGAKDILGHVYEYFLSRFAQAEGKRSGQYFTPKSIVSLIVEMLEPYSGRVYDPAMGSGGFFVQTERFITAHQGNINNVSIYGQEFNPTTWKLAAMNMAIRGIDYDFGKYNADSFTQPQHIDKKMDFIMANPHFNDKEWWNESLADDPRWAYGTPPKGNANFAWLQHMIYHLSPNGKIALLLANGSMSSQTNNEGEIRKAIINADLVECMVALPGQLFTNTKIPACIWFLNRNKKRKGEVLFIDARQIGYMKDRVLRDFTADDIAKIADTLHAWQTSDGYEDQAAFCKSATLEEIKNNDFVLTPGRYVGTAEQEDDGVPFAEKMQNLTALLKEQFAKSAELEAEIKKNLGGLGYE.

S-adenosyl-L-methionine is bound by residues 117-122 (QYFTPK), 146-148 (SGG), and Glu-173.

The protein belongs to the N(4)/N(6)-methyltransferase family. The type I restriction/modification system is composed of three polypeptides R, M and S; the restriction enzyme has stoichiometry R(2)M(2)S(1) while the methyltransferase is M(2)S(1).

It catalyses the reaction a 2'-deoxyadenosine in DNA + S-adenosyl-L-methionine = an N(6)-methyl-2'-deoxyadenosine in DNA + S-adenosyl-L-homocysteine + H(+). Its function is as follows. The subtype gamma methyltransferase (M) subunit of a type I restriction enzyme. The M and S subunits together form a methyltransferase (MTase) that methylates adenosines in the sequence 5'-RAACN(5)TAG-3'. Methylation protects against cleavage by HindI. In the presence of the R subunit the complex can also act as an endonuclease, binding to the same target sequence but cutting the DNA some distance from this site. Whether the DNA is cut or modified depends on the methylation state of the target sequence. When the target site is unmodified, the DNA is cut. When the target site is hemimethylated, the complex acts as a maintenance MTase modifying the DNA so that both strands become methylated. After locating a non-methylated recognition site, the enzyme complex serves as a molecular motor that translocates DNA in an ATP-dependent manner until a collision occurs that triggers cleavage. This is Type I restriction enzyme HindI methylase subunit from Haemophilus influenzae (strain ATCC 51907 / DSM 11121 / KW20 / Rd).